The primary structure comprises 376 residues: Glutamate 5-kinase (376 aa).

Lys-15 contacts ATP. 3 residues coordinate substrate: Ser-55, Asp-141, and Asn-153. Residues 173–174 and 215–221 contribute to the ATP site; these read SD and TGGMQTK. One can recognise a PUA domain in the interval 280 to 361; that stretch reads AGRLTVDAGA…HAIAEVLDEA (82 aa).

This sequence belongs to the glutamate 5-kinase family.

The protein resides in the cytoplasm. The catalysed reaction is L-glutamate + ATP = L-glutamyl 5-phosphate + ADP. The protein operates within amino-acid biosynthesis; L-proline biosynthesis; L-glutamate 5-semialdehyde from L-glutamate: step 1/2. Catalyzes the transfer of a phosphate group to glutamate to form L-glutamate 5-phosphate. The protein is Glutamate 5-kinase of Salinibacter ruber (strain DSM 13855 / M31).